The following is a 180-amino-acid chain: Large ribosomal subunit protein uL5 (180 aa).

It belongs to the universal ribosomal protein uL5 family. In terms of assembly, part of the 50S ribosomal subunit; part of the 5S rRNA/L5/L18/L25 subcomplex. Contacts the 5S rRNA and the P site tRNA. Forms a bridge to the 30S subunit in the 70S ribosome.

Functionally, this is one of the proteins that bind and probably mediate the attachment of the 5S RNA into the large ribosomal subunit, where it forms part of the central protuberance. In the 70S ribosome it contacts protein S13 of the 30S subunit (bridge B1b), connecting the 2 subunits; this bridge is implicated in subunit movement. Contacts the P site tRNA; the 5S rRNA and some of its associated proteins might help stabilize positioning of ribosome-bound tRNAs. This Chlamydia abortus (strain DSM 27085 / S26/3) (Chlamydophila abortus) protein is Large ribosomal subunit protein uL5.